We begin with the raw amino-acid sequence, 305 residues long: Methionyl-tRNA formyltransferase (305 aa).

111–114 (SILP) lines the (6S)-5,6,7,8-tetrahydrofolate pocket.

It belongs to the Fmt family.

It catalyses the reaction L-methionyl-tRNA(fMet) + (6R)-10-formyltetrahydrofolate = N-formyl-L-methionyl-tRNA(fMet) + (6S)-5,6,7,8-tetrahydrofolate + H(+). Attaches a formyl group to the free amino group of methionyl-tRNA(fMet). The formyl group appears to play a dual role in the initiator identity of N-formylmethionyl-tRNA by promoting its recognition by IF2 and preventing the misappropriation of this tRNA by the elongation apparatus. The sequence is that of Methionyl-tRNA formyltransferase from Wolinella succinogenes (strain ATCC 29543 / DSM 1740 / CCUG 13145 / JCM 31913 / LMG 7466 / NCTC 11488 / FDC 602W) (Vibrio succinogenes).